The following is a 141-amino-acid chain: Large ribosomal subunit protein uL11 (141 aa).

This sequence belongs to the universal ribosomal protein uL11 family. As to quaternary structure, part of the ribosomal stalk of the 50S ribosomal subunit. Interacts with L10 and the large rRNA to form the base of the stalk. L10 forms an elongated spine to which L12 dimers bind in a sequential fashion forming a multimeric L10(L12)X complex. Post-translationally, one or more lysine residues are methylated.

Functionally, forms part of the ribosomal stalk which helps the ribosome interact with GTP-bound translation factors. The sequence is that of Large ribosomal subunit protein uL11 from Chlorobium phaeovibrioides (strain DSM 265 / 1930) (Prosthecochloris vibrioformis (strain DSM 265)).